Reading from the N-terminus, the 109-residue chain is MANVTTDIKRNDTVAVTSGKDKGKQGRVLRVIPDKGRILVEHVGMVKNHVKPNPQKNIKGGIAEQESAIAISNVALVCAKCGPTRVAHKGEGKQKSRVCAKCGSDLTGK.

The segment at 1 to 24 (MANVTTDIKRNDTVAVTSGKDKGK) is disordered.

The protein belongs to the universal ribosomal protein uL24 family. In terms of assembly, part of the 50S ribosomal subunit.

One of two assembly initiator proteins, it binds directly to the 5'-end of the 23S rRNA, where it nucleates assembly of the 50S subunit. In terms of biological role, one of the proteins that surrounds the polypeptide exit tunnel on the outside of the subunit. This Koribacter versatilis (strain Ellin345) protein is Large ribosomal subunit protein uL24.